The sequence spans 658 residues: L-type lectin-domain containing receptor kinase V.4 (658 aa).

The signal sequence occupies residues 1 to 25 (MSRTIGSRVIFLILALFCCTENSRG). Residues 26–248 (KLVMQGSAGF…RAMHYMLSWF (223 aa)) are legume-lectin like. At 26-280 (KLVMQGSAGF…EKSLVYRIVL (255 aa)) the chain is on the extracellular side. Asparagine 66 and asparagine 196 each carry an N-linked (GlcNAc...) asparagine glycan. Residues 281–301 (VTSLALVLFVALVASALSIFF) traverse the membrane as a helical segment. The Cytoplasmic segment spans residues 302 to 658 (YRRHKKVKEV…LTEPFTSRGR (357 aa)). The Protein kinase domain occupies 334 to 592 (KGFKQLLGKG…LGVLCSHQAV (259 aa)). ATP is bound by residues 340-348 (LGKGGFGQV) and lysine 363. The active-site Proton acceptor is aspartate 460.

In the C-terminal section; belongs to the protein kinase superfamily. Ser/Thr protein kinase family. It in the N-terminal section; belongs to the leguminous lectin family.

It is found in the cell membrane. It carries out the reaction L-seryl-[protein] + ATP = O-phospho-L-seryl-[protein] + ADP + H(+). The enzyme catalyses L-threonyl-[protein] + ATP = O-phospho-L-threonyl-[protein] + ADP + H(+). In terms of biological role, involved in resistance response to the pathogenic oomycetes Phytophthora infestans and Phytophthora capsici and to the pathogenic bacteria Pseudomonas syringae. The protein is L-type lectin-domain containing receptor kinase V.4 of Arabidopsis thaliana (Mouse-ear cress).